Reading from the N-terminus, the 609-residue chain is RAS guanyl-releasing protein 2 (609 aa).

A lipid anchor (N-myristoyl glycine) is attached at A2. The N-terminal Ras-GEF domain maps to 4-126 (TLDLDKGCTV…SLIDIDSVPT (123 aa)). A lipid anchor (S-palmitoyl cysteine) is attached at L7. Residues S116, S117, and S147 each carry the phosphoserine modification. One can recognise a Ras-GEF domain in the interval 154 to 387 (EPMELAEHLT…YQLSLQREPR (234 aa)). Residues 382 to 406 (LQREPRSKSSPTSPTSCTPPPRPPV) form a disordered region. 2 EF-hand domains span residues 426 to 461 (HIEKMVESVFRNFDVDGDGHISQEEFQIIRGNFPYL) and 455 to 490 (RGNFPYLSAFGDLDQNQDGCISREEMVSYFLRSSSV). Residues D439, D441, D443, H445, E450, D468, N470, D472, C474, and E479 each contribute to the Ca(2+) site. The Phorbol-ester/DAG-type zinc finger occupies 498 to 548 (VHNFQESNSLRPVACRHCKALILGIYKQGLKCRACGVNCHKQCKDRLSVEC). S554 and S576 each carry phosphoserine. Positions 557-592 (LEGSAPSPSPMHSHHHRAFSFSLPRPGRRGSRPPEI) are disordered.

It belongs to the RASGRP family. Forms a signaling complex with RAP1 and BRAF. Interacts with RAP1. Interacts with F-actin. In terms of processing, isoform 2 is palmitoylated and myristoylated. Detected in platelets, neutrophils and T lymphocytes (at protein level). Expressed in brain where it is enriched in the striatum. Also expressed in the hematopoietic system. Detected in heart, brain, lung, placenta, liver, skeletal muscle and kidney.

It localises to the cytoplasm. Its subcellular location is the cytosol. The protein localises to the cell membrane. It is found in the synapse. The protein resides in the synaptosome. It localises to the cell projection. Its subcellular location is the ruffle membrane. With respect to regulation, isoform 1 and isoform 2 are differently regulated by calcium and DAG. Functionally, functions as a calcium- and DAG-regulated nucleotide exchange factor specifically activating Rap through the exchange of bound GDP for GTP. May also activate other GTPases such as RRAS, RRAS2, NRAS, KRAS but not HRAS. Functions in aggregation of platelets and adhesion of T-lymphocytes and neutrophils probably through inside-out integrin activation. May function in the muscarinic acetylcholine receptor M1/CHRM1 signaling pathway. This is RAS guanyl-releasing protein 2 (RASGRP2) from Homo sapiens (Human).